We begin with the raw amino-acid sequence, 161 residues long: Photosystem I reaction center subunit XI (161 aa).

A run of 2 helical transmembrane segments spans residues 84 to 104 (LIST…YGLV) and 126 to 146 (FTGG…FLLE).

Belongs to the PsaL family.

It is found in the cellular thylakoid membrane. This is Photosystem I reaction center subunit XI from Trichodesmium erythraeum (strain IMS101).